Reading from the N-terminus, the 490-residue chain is Cobyric acid synthase (490 aa).

Residues 252-439 enclose the GATase cobBQ-type domain; that stretch reads RLKVVVPVLP…LHGLFESTAA (188 aa). Cys-333 serves as the catalytic Nucleophile. His-431 is an active-site residue.

It belongs to the CobB/CobQ family. CobQ subfamily.

It functions in the pathway cofactor biosynthesis; adenosylcobalamin biosynthesis. Functionally, catalyzes amidations at positions B, D, E, and G on adenosylcobyrinic A,C-diamide. NH(2) groups are provided by glutamine, and one molecule of ATP is hydrogenolyzed for each amidation. This is Cobyric acid synthase from Pseudomonas aeruginosa (strain ATCC 15692 / DSM 22644 / CIP 104116 / JCM 14847 / LMG 12228 / 1C / PRS 101 / PAO1).